Consider the following 373-residue polypeptide: Ribosomal RNA small subunit methyltransferase H (373 aa).

Residues 92–94 (GGH), Asp-111, Tyr-138, Asp-159, and Gln-166 contribute to the S-adenosyl-L-methionine site. Composition is skewed to basic and acidic residues over residues 343–355 (AERADEQEIERNP) and 363–373 (RALEKVGGRGS). The interval 343 to 373 (AERADEQEIERNPRSAPVRLRALEKVGGRGS) is disordered.

It belongs to the methyltransferase superfamily. RsmH family.

Its subcellular location is the cytoplasm. The catalysed reaction is cytidine(1402) in 16S rRNA + S-adenosyl-L-methionine = N(4)-methylcytidine(1402) in 16S rRNA + S-adenosyl-L-homocysteine + H(+). In terms of biological role, specifically methylates the N4 position of cytidine in position 1402 (C1402) of 16S rRNA. This chain is Ribosomal RNA small subunit methyltransferase H, found in Mycolicibacterium smegmatis (strain ATCC 700084 / mc(2)155) (Mycobacterium smegmatis).